The primary structure comprises 104 residues: UPF0147 protein MK1586 (104 aa).

Belongs to the UPF0147 family.

This Methanopyrus kandleri (strain AV19 / DSM 6324 / JCM 9639 / NBRC 100938) protein is UPF0147 protein MK1586.